Consider the following 191-residue polypeptide: Protein GrpE (191 aa).

Residues methionine 1–glutamate 11 are compositionally biased toward basic and acidic residues. Disordered regions lie at residues methionine 1 to isoleucine 22 and lysine 172 to glutamate 191.

It belongs to the GrpE family. In terms of assembly, homodimer.

The protein resides in the cytoplasm. Participates actively in the response to hyperosmotic and heat shock by preventing the aggregation of stress-denatured proteins, in association with DnaK and GrpE. It is the nucleotide exchange factor for DnaK and may function as a thermosensor. Unfolded proteins bind initially to DnaJ; upon interaction with the DnaJ-bound protein, DnaK hydrolyzes its bound ATP, resulting in the formation of a stable complex. GrpE releases ADP from DnaK; ATP binding to DnaK triggers the release of the substrate protein, thus completing the reaction cycle. Several rounds of ATP-dependent interactions between DnaJ, DnaK and GrpE are required for fully efficient folding. The chain is Protein GrpE from Chlamydia abortus (strain DSM 27085 / S26/3) (Chlamydophila abortus).